Reading from the N-terminus, the 136-residue chain is Small ribosomal subunit protein uS11c (136 aa).

Residues 1–22 (MAKAIPKKGSRGRIGSRKSTRK) are disordered.

The protein belongs to the universal ribosomal protein uS11 family. Part of the 30S ribosomal subunit.

It is found in the plastid. The protein resides in the chloroplast. The sequence is that of Small ribosomal subunit protein uS11c from Lactuca sativa (Garden lettuce).